Here is a 65-residue protein sequence, read N- to C-terminus: Large ribosomal subunit protein bL35 (65 aa).

The protein belongs to the bacterial ribosomal protein bL35 family.

This is Large ribosomal subunit protein bL35 from Rhodospirillum rubrum (strain ATCC 11170 / ATH 1.1.1 / DSM 467 / LMG 4362 / NCIMB 8255 / S1).